An 85-amino-acid polypeptide reads, in one-letter code: U4-theraphotoxin-Hhn1r (85 aa).

The first 22 residues, 1 to 22 (MKVTLIAILTCAAVLVLHTTAA), serve as a signal peptide directing secretion. Positions 23–48 (EELEAESQLMEVGMPDTELAAVDEER) are excised as a propeptide. 3 disulfide bridges follow: C52–C66, C56–C77, and C71–C82.

The protein belongs to the neurotoxin 12 (Hwtx-2) family. 02 (Hwtx-2) subfamily. Expressed by the venom gland.

It localises to the secreted. Functionally, postsynaptic neurotoxin. This Cyriopagopus hainanus (Chinese bird spider) protein is U4-theraphotoxin-Hhn1r.